A 360-amino-acid chain; its full sequence is MKALILVGGYGTRLRPLTLSVPKPLVDFCNKPILLHQVEALVKAGVTHVILAVSYMSDMLEKEMKEQEKRLGIRISMSHEKEPLGTAGPLALARELLTENSEPFFVLNSDVICDFPFEDMVRFHKHHGKEGTIVVTKVEEPSKYGVVIYEAESGRIQRFVEKPQVFVSNKINSGLYIFSPAVLDRIQLRPTSIEKEIFPVMAQEGQLFALELQGFWMDIGQPKDFLTGMCMYLQSVRHKHPERLHVGPGFTGNVLVDPTAKIGQNCSIGPNVTIGPGVTVEDGVRIKRCSIMKGSRLHSHSWLQSSIVGWSSSVGQWVRMENVTVLGEDVIVNDELYLNGANVLPHKCISESVPEPRIIM.

The protein belongs to the transferase hexapeptide repeat family.

It catalyses the reaction alpha-D-mannose 1-phosphate + GTP + H(+) = GDP-alpha-D-mannose + diphosphate. It functions in the pathway nucleotide-sugar biosynthesis; GDP-alpha-D-mannose biosynthesis; GDP-alpha-D-mannose from alpha-D-mannose 1-phosphate (GTP route): step 1/1. Functionally, catalyzes the formation of GDP-mannose, an essential precursor of glycan moieties of glycoproteins and glycolipids. In Xenopus laevis (African clawed frog), this protein is Mannose-1-phosphate guanyltransferase beta-B (gmppb-b).